A 172-amino-acid polypeptide reads, in one-letter code: MKNVDHRNLDLFESVVDIARVSKVTKGGRQFSFRVAALVGDKKGCVGYATAKHDEVLDARSKAVRKAKGAMIRFPLREGRTIHHDCFSKLGASKLFIKPAPEGTGIVAGGAMRKFCEMLGVSDIIAKSYGSSTSGIVIRNAIKAFSLVCSPEYVAGKRNRKKSKFISKAVTQ.

One can recognise an S5 DRBM domain in the interval 11–74 (LFESVVDIAR…RKAKGAMIRF (64 aa)).

This sequence belongs to the universal ribosomal protein uS5 family. Part of the 30S ribosomal subunit. Contacts proteins S4 and S8.

Its function is as follows. With S4 and S12 plays an important role in translational accuracy. In terms of biological role, located at the back of the 30S subunit body where it stabilizes the conformation of the head with respect to the body. The chain is Small ribosomal subunit protein uS5 from Neorickettsia sennetsu (strain ATCC VR-367 / Miyayama) (Ehrlichia sennetsu).